The following is a 217-amino-acid chain: Probable transaldolase (217 aa).

The Schiff-base intermediate with substrate role is filled by Lys-83.

Belongs to the transaldolase family. Type 3B subfamily.

The protein resides in the cytoplasm. It catalyses the reaction D-sedoheptulose 7-phosphate + D-glyceraldehyde 3-phosphate = D-erythrose 4-phosphate + beta-D-fructose 6-phosphate. It functions in the pathway carbohydrate degradation; pentose phosphate pathway; D-glyceraldehyde 3-phosphate and beta-D-fructose 6-phosphate from D-ribose 5-phosphate and D-xylulose 5-phosphate (non-oxidative stage): step 2/3. Functionally, transaldolase is important for the balance of metabolites in the pentose-phosphate pathway. The sequence is that of Probable transaldolase from Caulobacter vibrioides (strain NA1000 / CB15N) (Caulobacter crescentus).